Here is a 325-residue protein sequence, read N- to C-terminus: Replication factor C small subunit (325 aa).

45–52 (GPPGTGKT) is an ATP binding site.

Belongs to the activator 1 small subunits family. RfcS subfamily. In terms of assembly, heteromultimer composed of small subunits (RfcS) and large subunits (RfcL).

Part of the RFC clamp loader complex which loads the PCNA sliding clamp onto DNA. In Sulfolobus acidocaldarius (strain ATCC 33909 / DSM 639 / JCM 8929 / NBRC 15157 / NCIMB 11770), this protein is Replication factor C small subunit.